We begin with the raw amino-acid sequence, 157 residues long: Protein Smg (157 aa).

Belongs to the Smg family.

The sequence is that of Protein Smg from Escherichia coli O6:H1 (strain CFT073 / ATCC 700928 / UPEC).